A 366-amino-acid chain; its full sequence is Carbamoyl phosphate synthase small chain (366 aa).

A CPSase region spans residues 1-168; the sequence is MYGILVLEDG…KETVIYNAED (168 aa). 3 residues coordinate L-glutamine: Ser-45, Gly-220, and Gly-222. The region spanning 172–363 is the Glutamine amidotransferase type-1 domain; that stretch reads RCVLIDCGVK…VELGIKFKAE (192 aa). Cys-247 serves as the catalytic Nucleophile. 5 residues coordinate L-glutamine: Leu-248, Gln-251, Asn-289, Gly-291, and Phe-292. Residues His-336 and Glu-338 contribute to the active site.

This sequence belongs to the CarA family. Composed of two chains; the small (or glutamine) chain promotes the hydrolysis of glutamine to ammonia, which is used by the large (or ammonia) chain to synthesize carbamoyl phosphate. Tetramer of heterodimers (alpha,beta)4.

It catalyses the reaction hydrogencarbonate + L-glutamine + 2 ATP + H2O = carbamoyl phosphate + L-glutamate + 2 ADP + phosphate + 2 H(+). The catalysed reaction is L-glutamine + H2O = L-glutamate + NH4(+). It functions in the pathway amino-acid biosynthesis; L-arginine biosynthesis; carbamoyl phosphate from bicarbonate: step 1/1. The protein operates within pyrimidine metabolism; UMP biosynthesis via de novo pathway; (S)-dihydroorotate from bicarbonate: step 1/3. In terms of biological role, small subunit of the glutamine-dependent carbamoyl phosphate synthetase (CPSase). CPSase catalyzes the formation of carbamoyl phosphate from the ammonia moiety of glutamine, carbonate, and phosphate donated by ATP, constituting the first step of 2 biosynthetic pathways, one leading to arginine and/or urea and the other to pyrimidine nucleotides. The small subunit (glutamine amidotransferase) binds and cleaves glutamine to supply the large subunit with the substrate ammonia. This Methanococcus maripaludis (strain C5 / ATCC BAA-1333) protein is Carbamoyl phosphate synthase small chain.